Here is a 123-residue protein sequence, read N- to C-terminus: Small ribosomal subunit protein uS12 (123 aa).

The segment at 1-30 (MPTIQQLIRKPRQPKVQRSKSQHLQSCPQK) is disordered. The span at 9-21 (RKPRQPKVQRSKS) shows a compositional bias: basic residues. Residue aspartate 89 is modified to 3-methylthioaspartic acid.

It belongs to the universal ribosomal protein uS12 family. In terms of assembly, part of the 30S ribosomal subunit. Contacts proteins S8 and S17. May interact with IF1 in the 30S initiation complex.

In terms of biological role, with S4 and S5 plays an important role in translational accuracy. Interacts with and stabilizes bases of the 16S rRNA that are involved in tRNA selection in the A site and with the mRNA backbone. Located at the interface of the 30S and 50S subunits, it traverses the body of the 30S subunit contacting proteins on the other side and probably holding the rRNA structure together. The combined cluster of proteins S8, S12 and S17 appears to hold together the shoulder and platform of the 30S subunit. This chain is Small ribosomal subunit protein uS12, found in Paracoccus denitrificans (strain Pd 1222).